Here is a 338-residue protein sequence, read N- to C-terminus: Large ribosomal subunit protein uL10 (338 aa).

Positions 298–308 (AAQQTQTQQST) are enriched in low complexity. The segment at 298-338 (AAQQTQTQQSTAEEKKEEKKEEEKKGPSEEEIGSGLASLFG) is disordered. The segment covering 309–325 (AEEKKEEKKEEEKKGPS) has biased composition (basic and acidic residues).

This sequence belongs to the universal ribosomal protein uL10 family. As to quaternary structure, part of the 50S ribosomal subunit. Forms part of the ribosomal stalk which helps the ribosome interact with GTP-bound translation factors. Forms a heptameric L10(L12)2(L12)2(L12)2 complex, where L10 forms an elongated spine to which the L12 dimers bind in a sequential fashion.

Functionally, forms part of the ribosomal stalk, playing a central role in the interaction of the ribosome with GTP-bound translation factors. This is Large ribosomal subunit protein uL10 from Saccharolobus islandicus (strain M.16.27) (Sulfolobus islandicus).